An 89-amino-acid polypeptide reads, in one-letter code: Protein FAM25A (89 aa).

This sequence belongs to the FAM25 family.

The polypeptide is Protein FAM25A (Mus musculus (Mouse)).